A 464-amino-acid polypeptide reads, in one-letter code: E3 ubiquitin-protein ligase TRAIP (464 aa).

Residues 7-50 (CTICSDFFDNARDVAAITCGHTFHQECLLQWFHSAPHRTCPQCR) form an RING-type; atypical zinc finger. Coiled coils occupy residues 142–186 (LDKQ…MIRD) and 236–277 (AQKA…LQKT). Positions 439–464 (KRKKVSRPTACTSSLANQPRLEDFLK) are disordered. The short motif at 456 to 464 (QPRLEDFLK) is the PIP-box element.

The protein belongs to the TRAIP family.

The protein resides in the nucleus. It localises to the nucleoplasm. The protein localises to the nucleolus. It is found in the chromosome. Its subcellular location is the cytoplasm. The catalysed reaction is S-ubiquitinyl-[E2 ubiquitin-conjugating enzyme]-L-cysteine + [acceptor protein]-L-lysine = [E2 ubiquitin-conjugating enzyme]-L-cysteine + N(6)-ubiquitinyl-[acceptor protein]-L-lysine.. Its pathway is protein modification; protein ubiquitination. Its function is as follows. E3 ubiquitin ligase required to protect genome stability in response to replication stress. Acts as a key regulator of interstrand cross-link repair, which takes place when both strands of duplex DNA are covalently tethered together, thereby blocking replication and transcription. Controls the choice between the two pathways of replication-coupled interstrand-cross-link repair by mediating ubiquitination of mcm7 subunit of the CMG helicase complex. Short ubiquitin chains on mcm7 promote recruitment of DNA glycosylase neil3. If the interstrand cross-link cannot be cleaved by neil3, the ubiquitin chains continue to grow on mcm7, promoting the unloading of the CMG helicase complex by the vcp/p97 ATPase, enabling the Fanconi anemia DNA repair pathway. Only catalyzes ubiquitination of mcm7 when forks converge. Also involved in the repair of covalent DNA-protein cross-links (DPCs) during DNA synthesis: promotes ubiquitination of DPCs, leading to their degradation by the proteasome. Also acts as a negative regulator of innate immune signaling by inhibiting activation of NF-kappa-B mediated by TNF. This is E3 ubiquitin-protein ligase TRAIP from Xenopus laevis (African clawed frog).